A 121-amino-acid chain; its full sequence is Small ribosomal subunit protein uS13 (121 aa).

A disordered region spans residues 91–121 (HRMSLPVRGQRTRTNARTRRGSRKTVAGRKK). Basic residues predominate over residues 100–121 (QRTRTNARTRRGSRKTVAGRKK).

Belongs to the universal ribosomal protein uS13 family. As to quaternary structure, part of the 30S ribosomal subunit. Forms a loose heterodimer with protein S19. Forms two bridges to the 50S subunit in the 70S ribosome.

Functionally, located at the top of the head of the 30S subunit, it contacts several helices of the 16S rRNA. In the 70S ribosome it contacts the 23S rRNA (bridge B1a) and protein L5 of the 50S subunit (bridge B1b), connecting the 2 subunits; these bridges are implicated in subunit movement. Contacts the tRNAs in the A and P-sites. The polypeptide is Small ribosomal subunit protein uS13 (Prochlorococcus marinus (strain SARG / CCMP1375 / SS120)).